The primary structure comprises 268 residues: LOB domain-containing protein 13 (268 aa).

In terms of domain architecture, LOB spans 51 to 152; the sequence is TPCAACKLLR…SELTTVRTEI (102 aa). The interval 191–268 is disordered; that stretch reads LLPPPPPPPP…SSDNNVHYFD (78 aa). Pro residues-rich tracts occupy residues 192–205 and 212–222; these read LPPP…PRPP and PAPPPTPPVSL. A compositionally biased stretch (low complexity) spans 223 to 243; it reads PSPSMVVSSSSSSNSSATNSM. Residues 250-268 are compositionally biased toward polar residues; the sequence is STAGYSNSLSSDNNVHYFD.

It belongs to the LOB domain-containing protein family. Expressed in shoots and roots and at low levels in flowers, but not in leaves or inflorescence stems.

The chain is LOB domain-containing protein 13 (LBD13) from Arabidopsis thaliana (Mouse-ear cress).